The chain runs to 299 residues: Small ribosomal subunit biogenesis GTPase RsgA (299 aa).

One can recognise a CP-type G domain in the interval 73-232; sequence CSWLTRPQVA…VADTPGFNRP (160 aa). Residues 122-125 and 174-182 contribute to the GTP site; these read TKGD and GPSGVGKSS. Zn(2+)-binding residues include Cys-257, Cys-262, His-264, and Cys-270.

This sequence belongs to the TRAFAC class YlqF/YawG GTPase family. RsgA subfamily. As to quaternary structure, monomer. Associates with 30S ribosomal subunit, binds 16S rRNA. The cofactor is Zn(2+).

The protein localises to the cytoplasm. One of several proteins that assist in the late maturation steps of the functional core of the 30S ribosomal subunit. Helps release RbfA from mature subunits. May play a role in the assembly of ribosomal proteins into the subunit. Circularly permuted GTPase that catalyzes slow GTP hydrolysis, GTPase activity is stimulated by the 30S ribosomal subunit. The chain is Small ribosomal subunit biogenesis GTPase RsgA from Parasynechococcus marenigrum (strain WH8102).